We begin with the raw amino-acid sequence, 298 residues long: Beta-soluble NSF attachment protein (298 aa).

The protein belongs to the SNAP family. In terms of assembly, interacts with PRKCABP, and disrupts the interaction between GRIA2 and PRKCABP, leading to the internalization of GRIA2. In terms of tissue distribution, brain.

It localises to the membrane. Required for vesicular transport between the endoplasmic reticulum and the Golgi apparatus. The chain is Beta-soluble NSF attachment protein (NAPB) from Bos taurus (Bovine).